The primary structure comprises 260 residues: Indole-3-glycerol phosphate synthase (260 aa).

The protein belongs to the TrpC family.

It carries out the reaction 1-(2-carboxyphenylamino)-1-deoxy-D-ribulose 5-phosphate + H(+) = (1S,2R)-1-C-(indol-3-yl)glycerol 3-phosphate + CO2 + H2O. It participates in amino-acid biosynthesis; L-tryptophan biosynthesis; L-tryptophan from chorismate: step 4/5. The sequence is that of Indole-3-glycerol phosphate synthase from Desulfotalea psychrophila (strain LSv54 / DSM 12343).